A 156-amino-acid polypeptide reads, in one-letter code: Small ribosomal subunit protein uS7 (156 aa).

This sequence belongs to the universal ribosomal protein uS7 family. In terms of assembly, part of the 30S ribosomal subunit. Contacts proteins S9 and S11.

Its function is as follows. One of the primary rRNA binding proteins, it binds directly to 16S rRNA where it nucleates assembly of the head domain of the 30S subunit. Is located at the subunit interface close to the decoding center, probably blocks exit of the E-site tRNA. This is Small ribosomal subunit protein uS7 from Nitrosococcus oceani (strain ATCC 19707 / BCRC 17464 / JCM 30415 / NCIMB 11848 / C-107).